A 176-amino-acid chain; its full sequence is Odorant-binding protein 2a (176 aa).

The N-terminal stretch at 1-19 (MKSLLLTILLLGLVAVLKA) is a signal peptide. Residues N42 and N124 are each glycosylated (N-linked (GlcNAc...) asparagine). A disulfide bond links C79 and C172.

Belongs to the calycin superfamily. Lipocalin family. As to expression, expressed in the liver (at protein level). Expressed in epididymis.

The protein resides in the secreted. Its function is as follows. Involved in the regulation of systematic glucose homeostasis and insulin sensitivity. Involved in the regulation of liver lipid levels by positive regulation of hepatic lipogenesis and negative regulation of fatty acid beta-oxidation; via downstream transcriptional regulation of CPT1A and hepatic lipogenic program gene expression. May regulate hepatic lipogenesis and fatty acid beta-oxidation in an autocrine or paracrine manner. The protein is Odorant-binding protein 2a (Obp2a) of Mus musculus (Mouse).